The following is a 208-amino-acid chain: Uracil phosphoribosyltransferase (208 aa).

Residues Arg-78, Arg-103, and 130–138 (DPMLATGGS) each bind 5-phospho-alpha-D-ribose 1-diphosphate. Uracil-binding positions include Ile-193 and 198-200 (GDA). Asp-199 is a 5-phospho-alpha-D-ribose 1-diphosphate binding site.

The protein belongs to the UPRTase family. It depends on Mg(2+) as a cofactor.

The catalysed reaction is UMP + diphosphate = 5-phospho-alpha-D-ribose 1-diphosphate + uracil. The protein operates within pyrimidine metabolism; UMP biosynthesis via salvage pathway; UMP from uracil: step 1/1. With respect to regulation, allosterically activated by GTP. Its function is as follows. Catalyzes the conversion of uracil and 5-phospho-alpha-D-ribose 1-diphosphate (PRPP) to UMP and diphosphate. In Haemophilus influenzae (strain PittEE), this protein is Uracil phosphoribosyltransferase.